Reading from the N-terminus, the 100-residue chain is Urease subunit gamma (100 aa).

The protein belongs to the urease gamma subunit family. Heterotrimer of UreA (gamma), UreB (beta) and UreC (alpha) subunits. Three heterotrimers associate to form the active enzyme.

It localises to the cytoplasm. It carries out the reaction urea + 2 H2O + H(+) = hydrogencarbonate + 2 NH4(+). Its pathway is nitrogen metabolism; urea degradation; CO(2) and NH(3) from urea (urease route): step 1/1. The protein is Urease subunit gamma of Enterobacter sp. (strain 638).